A 446-amino-acid chain; its full sequence is Acyl-lipid (8-3)-desaturase (446 aa).

In terms of domain architecture, Cytochrome b5 heme-binding spans 6 to 82; it reads GKTFTWEELA…MKKYYVGTLV (77 aa). Residues His-41 and His-64 each coordinate heme. 2 helical membrane-spanning segments follow: residues 125–145 and 150–170; these read ALIFGSLIASYYAQLFVPFVV and LQVVFAIIMGFACAQVGLNPL. The short motif at 171-175 is the Histidine box-1 element; that stretch reads HDASH. The short motif at 207–212 is the Histidine box-2 element; the sequence is HMLGHH. A Histidine box-3 motif is present at residues 387–391; that stretch reads QAVHH.

This sequence belongs to the fatty acid desaturase type 1 family. Requires Fe(2+) as cofactor.

It is found in the membrane. The enzyme catalyses an (8Z,11Z,14Z)-icosatrienoyl-containing glycerolipid + 2 Fe(II)-[cytochrome b5] + O2 + 2 H(+) = (5Z,8Z,11Z,14Z)-eicosatetraenoyl-containing glycerolipid + 2 Fe(III)-[cytochrome b5] + 2 H2O. It catalyses the reaction an (8Z,11Z,14Z,17Z)-eicosatetraenoyl-containing glycerolipid + 2 Fe(II)-[cytochrome b5] + O2 + 2 H(+) = a (5Z,8Z,11Z,14Z,17Z)-eicosapentaenoyl-containing glycerolipid + 2 Fe(III)-[cytochrome b5] + 2 H2O. Its function is as follows. Fatty acid desaturase that introduces a cis double bond at the 5-position in 20-carbon polyunsaturated fatty acids incorporated in a glycerolipid that contain a Delta(8) double bond. Involved in the conversion of di-homo-Delta-linolenic acid to arachidonic acid. Essential in the production of eicosanoids. This is Acyl-lipid (8-3)-desaturase (DES1) from Mortierella alpina (Oleaginous fungus).